We begin with the raw amino-acid sequence, 144 residues long: UPF0306 protein ESA_03544 (144 aa).

It belongs to the UPF0306 family.

The polypeptide is UPF0306 protein ESA_03544 (Cronobacter sakazakii (strain ATCC BAA-894) (Enterobacter sakazakii)).